Here is a 660-residue protein sequence, read N- to C-terminus: Acetyl-coenzyme A synthetase (660 aa).

CoA-binding positions include 197–200 (RGGK) and T317. ATP-binding positions include 397-399 (GEP), 421-426 (DTFWQT), D512, and R528. Position 536 (S536) interacts with CoA. R539 contacts ATP. Positions 550 and 555 each coordinate Mg(2+). K625 bears the N6-acetyllysine mark.

This sequence belongs to the ATP-dependent AMP-binding enzyme family. Mg(2+) is required as a cofactor. Acetylated. Deacetylation by the SIR2-homolog deacetylase activates the enzyme.

The enzyme catalyses acetate + ATP + CoA = acetyl-CoA + AMP + diphosphate. Catalyzes the conversion of acetate into acetyl-CoA (AcCoA), an essential intermediate at the junction of anabolic and catabolic pathways. AcsA undergoes a two-step reaction. In the first half reaction, AcsA combines acetate with ATP to form acetyl-adenylate (AcAMP) intermediate. In the second half reaction, it can then transfer the acetyl group from AcAMP to the sulfhydryl group of CoA, forming the product AcCoA. The protein is Acetyl-coenzyme A synthetase of Cupriavidus pinatubonensis (strain JMP 134 / LMG 1197) (Cupriavidus necator (strain JMP 134)).